Here is a 141-residue protein sequence, read N- to C-terminus: Large ribosomal subunit protein uL13 (141 aa).

Belongs to the universal ribosomal protein uL13 family. Part of the 50S ribosomal subunit.

In terms of biological role, this protein is one of the early assembly proteins of the 50S ribosomal subunit, although it is not seen to bind rRNA by itself. It is important during the early stages of 50S assembly. The protein is Large ribosomal subunit protein uL13 of Helicobacter pylori (strain G27).